A 328-amino-acid polypeptide reads, in one-letter code: Probable D,D-dipeptide transport ATP-binding protein DdpD (328 aa).

The region spanning 6–257 (LDIQQLHLSF…PRHPYTIGLL (252 aa)) is the ABC transporter domain. 42 to 49 (GESGSGKS) provides a ligand contact to ATP.

This sequence belongs to the ABC transporter superfamily. In terms of assembly, the complex is composed of two ATP-binding proteins (DdpD and DdpF), two transmembrane proteins (DdpB and DdpC) and a solute-binding protein (DdpA).

It localises to the cell inner membrane. In terms of biological role, part of the ABC transporter complex DdpABCDF, which is probably involved in D,D-dipeptide transport. Probably responsible for energy coupling to the transport system. This chain is Probable D,D-dipeptide transport ATP-binding protein DdpD, found in Escherichia coli (strain K12).